The chain runs to 906 residues: Protein translocase subunit SecA (906 aa).

ATP contacts are provided by residues Gln-87, 105–109 (GEGKT), and Asp-513. A disordered region spans residues 860–906 (QVNKGEVVSDENTGDDTFVRNEKKVGRNEPCPCGSGKKYKQCHGKLD). A compositionally biased stretch (basic and acidic residues) spans 876 to 886 (TFVRNEKKVGR). Residues Cys-890, Cys-892, Cys-901, and His-902 each coordinate Zn(2+). Positions 896 to 906 (KKYKQCHGKLD) are enriched in basic residues.

The protein belongs to the SecA family. In terms of assembly, monomer and homodimer. Part of the essential Sec protein translocation apparatus which comprises SecA, SecYEG and auxiliary proteins SecDF-YajC and YidC. Requires Zn(2+) as cofactor.

It is found in the cell inner membrane. The protein localises to the cytoplasm. The catalysed reaction is ATP + H2O + cellular proteinSide 1 = ADP + phosphate + cellular proteinSide 2.. Functionally, part of the Sec protein translocase complex. Interacts with the SecYEG preprotein conducting channel. Has a central role in coupling the hydrolysis of ATP to the transfer of proteins into and across the cell membrane, serving both as a receptor for the preprotein-SecB complex and as an ATP-driven molecular motor driving the stepwise translocation of polypeptide chains across the membrane. The sequence is that of Protein translocase subunit SecA from Psychromonas ingrahamii (strain DSM 17664 / CCUG 51855 / 37).